A 458-amino-acid polypeptide reads, in one-letter code: Argininosuccinate lyase (458 aa).

This sequence belongs to the lyase 1 family. Argininosuccinate lyase subfamily.

The protein resides in the cytoplasm. It carries out the reaction 2-(N(omega)-L-arginino)succinate = fumarate + L-arginine. The protein operates within amino-acid biosynthesis; L-arginine biosynthesis; L-arginine from L-ornithine and carbamoyl phosphate: step 3/3. In Glaesserella parasuis serovar 5 (strain SH0165) (Haemophilus parasuis), this protein is Argininosuccinate lyase.